A 302-amino-acid chain; its full sequence is N-acetyl-D-glucosamine kinase (302 aa).

Residues 4-11 (GFDIGGTK) and 133-139 (GGGGLVL) contribute to the ATP site. Zn(2+)-binding residues include H156, C176, C178, and C183.

Belongs to the ROK (NagC/XylR) family. NagK subfamily.

It catalyses the reaction N-acetyl-D-glucosamine + ATP = N-acetyl-D-glucosamine 6-phosphate + ADP + H(+). It functions in the pathway cell wall biogenesis; peptidoglycan recycling. In terms of biological role, catalyzes the phosphorylation of N-acetyl-D-glucosamine (GlcNAc) derived from cell-wall degradation, yielding GlcNAc-6-P. The chain is N-acetyl-D-glucosamine kinase from Salmonella typhi.